We begin with the raw amino-acid sequence, 243 residues long: Carboxy-S-adenosyl-L-methionine synthase (243 aa).

Residues Y40, 65 to 67 (GCS), 90 to 91 (DN), 118 to 119 (DI), N133, and R200 each bind S-adenosyl-L-methionine.

This sequence belongs to the class I-like SAM-binding methyltransferase superfamily. Cx-SAM synthase family. As to quaternary structure, homodimer.

It carries out the reaction prephenate + S-adenosyl-L-methionine = carboxy-S-adenosyl-L-methionine + 3-phenylpyruvate + H2O. In terms of biological role, catalyzes the conversion of S-adenosyl-L-methionine (SAM) to carboxy-S-adenosyl-L-methionine (Cx-SAM). This chain is Carboxy-S-adenosyl-L-methionine synthase, found in Shewanella putrefaciens (strain CN-32 / ATCC BAA-453).